Reading from the N-terminus, the 102-residue chain is Small ribosomal subunit protein uS10 (102 aa).

The protein belongs to the universal ribosomal protein uS10 family. In terms of assembly, part of the 30S ribosomal subunit.

Involved in the binding of tRNA to the ribosomes. The sequence is that of Small ribosomal subunit protein uS10 from Latilactobacillus sakei subsp. sakei (strain 23K) (Lactobacillus sakei subsp. sakei).